A 1960-amino-acid polypeptide reads, in one-letter code: Myosin-9 (1960 aa).

N-acetylalanine is present on A2. The mediates interaction with LIMCH1 stretch occupies residues 2–838 (AQQAADKYLY…RLFTKVKPLL (837 aa)). Position 8 is an N6-acetyllysine (K8). Phosphotyrosine is present on Y11. A Myosin N-terminal SH3-like domain is found at 27–77 (AAKKLVWVPSDKSGFEPASLKEEVGEEAIVELVENGKKVKVNKDDIQKMNP). Positions 81–776 (SKVEDMAELT…VLAHLEEERD (696 aa)) constitute a Myosin motor domain. The residue at position 102 (K102) is an N6-acetyllysine. 174 to 181 (GESGAGKT) is a binding site for ATP. An N6-acetyllysine mark is found at K299, K435, and K613. S628 is modified (phosphoserine). Positions 654 to 676 (LAKLMATLRNTNPNFVRCIIPNH) are actin-binding. Y754 is modified (phosphotyrosine). The region spanning 779-808 (ITDVIIGFQACCRGYLARKAFAKRQQQLTA) is the IQ domain. Positions 837–1926 (LLQVSRQEEE…LKNKLRRGDL (1090 aa)) form a coiled coil. K850 is modified (N6-succinyllysine). An N6-acetyllysine mark is found at K860, K975, and K1024. Phosphoserine is present on S1114. Positions 1117–1137 (QEDLESERASRNKAEKQKRDL) are disordered. A compositionally biased stretch (basic and acidic residues) spans 1122 to 1137 (SERASRNKAEKQKRDL). K1234, K1249, K1357, K1392, K1404, K1410, K1459, and K1638 each carry N6-acetyllysine. Residue K1669 is modified to N6-succinyllysine. At S1714 the chain carries Phosphoserine. 3 positions are modified to N6-acetyllysine: K1793, K1802, and K1845. A disordered region spans residues 1877 to 1918 (RQLEEAEEEAQRANASRRKLQRELEDATETADAMNREVSSLK). At R1923 the chain carries Omega-N-methylarginine. The disordered stretch occupies residues 1934–1960 (VARKGAGDCSDEEVDGKADGAEAKAAE). S1943 is modified (phosphoserine). Residues 1948–1960 (DGKADGAEAKAAE) show a composition bias toward basic and acidic residues.

It belongs to the TRAFAC class myosin-kinesin ATPase superfamily. Myosin family. Myosin is a hexameric protein that consists of 2 heavy chain subunits (MHC), 2 alkali light chain subunits (MLC) and 2 regulatory light chain subunits (MLC-2). Interacts with RASIP1. Interacts with DDR1. Interacts with PDLIM2. Interacts with SVIL. Interacts with HTRA3. Interacts with Myo7a. Interacts with CFAP95. Interacts with LIMCH1; independently of the integration of MYH9 into the myosin complex. Interacts with RAB3A. Interacts with ZBED4. Interacts with S100A4; this interaction increases cell motility. In terms of processing, ISGylated. Ubiquitination.

The protein localises to the cytoplasm. It localises to the cytoskeleton. It is found in the cell cortex. Its subcellular location is the cytoplasmic vesicle. The protein resides in the secretory vesicle. The protein localises to the cortical granule. Cellular myosin that appears to play a role in cytokinesis, cell shape, and specialized functions such as secretion and capping. Required for cortical actin clearance prior to oocyte exocytosis. Promotes cell motility in conjunction with S100A4. During cell spreading, plays an important role in cytoskeleton reorganization, focal contact formation (in the margins but not the central part of spreading cells), and lamellipodial retraction; this function is mechanically antagonized by MYH10. The sequence is that of Myosin-9 (MYH9) from Canis lupus familiaris (Dog).